The sequence spans 349 residues: tRNA N6-adenosine threonylcarbamoyltransferase (349 aa).

2 residues coordinate Fe cation: histidine 117 and histidine 121. Substrate-binding positions include 139 to 143, aspartate 172, glycine 185, aspartate 189, and asparagine 278; that span reads QVSGG. Position 310 (aspartate 310) interacts with Fe cation.

Belongs to the KAE1 / TsaD family. Fe(2+) is required as a cofactor.

It is found in the cytoplasm. It catalyses the reaction L-threonylcarbamoyladenylate + adenosine(37) in tRNA = N(6)-L-threonylcarbamoyladenosine(37) in tRNA + AMP + H(+). In terms of biological role, required for the formation of a threonylcarbamoyl group on adenosine at position 37 (t(6)A37) in tRNAs that read codons beginning with adenine. Is involved in the transfer of the threonylcarbamoyl moiety of threonylcarbamoyl-AMP (TC-AMP) to the N6 group of A37, together with TsaE and TsaB. TsaD likely plays a direct catalytic role in this reaction. The protein is tRNA N6-adenosine threonylcarbamoyltransferase of Lactobacillus acidophilus (strain ATCC 700396 / NCK56 / N2 / NCFM).